The sequence spans 190 residues: Recombination protein RecR (190 aa).

Residues 58-73 (CGQCGALSENELCEIC) form a C4-type zinc finger. The region spanning 81–167 (NILCIVESPK…TFSKIAQGIP (87 aa)) is the Toprim domain.

It belongs to the RecR family.

In terms of biological role, may play a role in DNA repair. It seems to be involved in an RecBC-independent recombinational process of DNA repair. It may act with RecF and RecO. The chain is Recombination protein RecR from Campylobacter jejuni subsp. jejuni serotype O:6 (strain 81116 / NCTC 11828).